A 345-amino-acid chain; its full sequence is Tropomodulin-4 (345 aa).

2 disordered regions span residues 40–64 and 326–345; these read PENM…GPLD and ARAA…QKKR. Basic and acidic residues predominate over residues 336–345; sequence NELRRQQKKR.

It belongs to the tropomodulin family. Binds to the N-terminus of tropomyosin and to actin.

It localises to the cytoplasm. Its subcellular location is the cytoskeleton. Functionally, blocks the elongation and depolymerization of the actin filaments at the pointed end. The Tmod/TM complex contributes to the formation of the short actin protofilament, which in turn defines the geometry of the membrane skeleton. This chain is Tropomodulin-4 (Tmod4), found in Mus musculus (Mouse).